The chain runs to 233 residues: MSVHIGAEKGQIADTVLLPGDPLRAKFIAETYLENVECYNEVRGMYGFTGTYKGKKISVQGTGMGVPSISIYVNELIQSYDVQNLIRVGSCGAIRKDVKVRDVILAMTSSTDSQMNRVAFGSVDFAPCADFELLKNAYDAAKDKGVPVTVGSVFTADQFYNDDSQIEKLAKYGVLGVEMETTALYTLAAKHGRKALSILTVSDHVLTGEETTAEERQTTFHDMIEVALHSVSQ.

His4 contributes to the a purine D-ribonucleoside binding site. Phosphate contacts are provided by residues Gly20, Arg24, Arg43, and 87 to 90 (RVGS). Residues 178-180 (EME) and 202-203 (SD) each bind a purine D-ribonucleoside. Asp203 serves as the catalytic Proton donor.

Belongs to the PNP/UDP phosphorylase family. In terms of assembly, homohexamer; trimer of homodimers.

The catalysed reaction is a purine D-ribonucleoside + phosphate = a purine nucleobase + alpha-D-ribose 1-phosphate. The enzyme catalyses a purine 2'-deoxy-D-ribonucleoside + phosphate = a purine nucleobase + 2-deoxy-alpha-D-ribose 1-phosphate. Catalyzes the reversible phosphorolytic breakdown of the N-glycosidic bond in the beta-(deoxy)ribonucleoside molecules, with the formation of the corresponding free purine bases and pentose-1-phosphate. In Bacillus subtilis (strain 168), this protein is Purine nucleoside phosphorylase DeoD-type.